The primary structure comprises 556 residues: Formate--tetrahydrofolate ligase (556 aa).

An ATP-binding site is contributed by 65–72 (TPAGEGKS).

It belongs to the formate--tetrahydrofolate ligase family.

The enzyme catalyses (6S)-5,6,7,8-tetrahydrofolate + formate + ATP = (6R)-10-formyltetrahydrofolate + ADP + phosphate. It functions in the pathway one-carbon metabolism; tetrahydrofolate interconversion. The chain is Formate--tetrahydrofolate ligase from Streptococcus thermophilus (strain ATCC BAA-491 / LMD-9).